The following is a 235-amino-acid chain: MIYVSSDSFFVFWRPGSNQNILTFYRAMKLWSTWITLLILTFFCSECNAKRGGRGGGGSSAMGKHYSRSKSYFTRKYSKPGSIEHTSSFRSFVFGATSGLLMFNAGRHIIQDSSEPISFGNRKYFWGESKYVPDEELPVQCINKIDPQDPQFGKVFFDNESRPQEIVYACPADNNCCGYDCCSNSTIFTSIFSLLVILLIVSVLSIFVIECVRWCLHCTYFCKHGHGRDFEPLSI.

The chain crosses the membrane as a helical span at residues 27 to 47 (AMKLWSTWITLLILTFFCSEC). In terms of domain architecture, CX spans 124-185 (YFWGESKYVP…CCGYDCCSNS (62 aa)). Residues 187–207 (IFTSIFSLLVILLIVSVLSIF) traverse the membrane as a helical segment.

The protein localises to the membrane. This is an uncharacterized protein from Caenorhabditis elegans.